The following is a 356-amino-acid chain: NADH-quinone oxidoreductase subunit H (356 aa).

Transmembrane regions (helical) follow at residues 22-42 (GVVS…TAYL), 59-79 (PSLA…KLVF), 93-113 (FIIA…VIPI), 124-144 (IGGI…IIIA), 171-191 (MALS…IQIV), 198-218 (PIWL…SILA), 240-260 (VEYS…NMIL), 285-305 (IPGY…FLWI), and 321-341 (GLKV…TILV).

This sequence belongs to the complex I subunit 1 family. As to quaternary structure, NDH-1 is composed of 14 different subunits. Subunits NuoA, H, J, K, L, M, N constitute the membrane sector of the complex.

It localises to the cell inner membrane. The catalysed reaction is a quinone + NADH + 5 H(+)(in) = a quinol + NAD(+) + 4 H(+)(out). In terms of biological role, NDH-1 shuttles electrons from NADH, via FMN and iron-sulfur (Fe-S) centers, to quinones in the respiratory chain. The immediate electron acceptor for the enzyme in this species is believed to be ubiquinone. Couples the redox reaction to proton translocation (for every two electrons transferred, four hydrogen ions are translocated across the cytoplasmic membrane), and thus conserves the redox energy in a proton gradient. This subunit may bind ubiquinone. This is NADH-quinone oxidoreductase subunit H from Orientia tsutsugamushi (strain Boryong) (Rickettsia tsutsugamushi).